We begin with the raw amino-acid sequence, 302 residues long: Enolase-phosphatase E1 (302 aa).

Basic residues predominate over residues 1–10 (MSDSRLRRRQ). The segment at 1-25 (MSDSRLRRRQGTAGTDNKRRADGPH) is disordered. Positions 16–25 (DNKRRADGPH) are enriched in basic and acidic residues. Asp40 and Glu42 together coordinate Mg(2+). Residues 183-184 (SS) and Lys217 each bind substrate. Position 242 (Asp242) interacts with Mg(2+).

The protein belongs to the HAD-like hydrolase superfamily. MasA/MtnC family. Monomer. It depends on Mg(2+) as a cofactor.

It is found in the cytoplasm. Its subcellular location is the nucleus. It carries out the reaction 5-methylsulfanyl-2,3-dioxopentyl phosphate + H2O = 1,2-dihydroxy-5-(methylsulfanyl)pent-1-en-3-one + phosphate. It functions in the pathway amino-acid biosynthesis; L-methionine biosynthesis via salvage pathway; L-methionine from S-methyl-5-thio-alpha-D-ribose 1-phosphate: step 3/6. Its pathway is amino-acid biosynthesis; L-methionine biosynthesis via salvage pathway; L-methionine from S-methyl-5-thio-alpha-D-ribose 1-phosphate: step 4/6. Functionally, bifunctional enzyme that catalyzes the enolization of 2,3-diketo-5-methylthiopentyl-1-phosphate (DK-MTP-1-P) into the intermediate 2-hydroxy-3-keto-5-methylthiopentenyl-1-phosphate (HK-MTPenyl-1-P), which is then dephosphorylated to form the acireductone 1,2-dihydroxy-3-keto-5-methylthiopentene (DHK-MTPene). This Branchiostoma floridae (Florida lancelet) protein is Enolase-phosphatase E1.